The following is a 118-amino-acid chain: Large ribosomal subunit protein uL18 (118 aa).

Belongs to the universal ribosomal protein uL18 family. In terms of assembly, part of the 50S ribosomal subunit; part of the 5S rRNA/L5/L18/L25 subcomplex. Contacts the 5S and 23S rRNAs.

In terms of biological role, this is one of the proteins that bind and probably mediate the attachment of the 5S RNA into the large ribosomal subunit, where it forms part of the central protuberance. The protein is Large ribosomal subunit protein uL18 of Brachyspira hyodysenteriae (strain ATCC 49526 / WA1).